The sequence spans 355 residues: Protein RecA (355 aa).

67–74 (GPESSGKT) contributes to the ATP binding site.

Belongs to the RecA family.

The protein localises to the cytoplasm. Can catalyze the hydrolysis of ATP in the presence of single-stranded DNA, the ATP-dependent uptake of single-stranded DNA by duplex DNA, and the ATP-dependent hybridization of homologous single-stranded DNAs. It interacts with LexA causing its activation and leading to its autocatalytic cleavage. The polypeptide is Protein RecA (Shewanella amazonensis (strain ATCC BAA-1098 / SB2B)).